The primary structure comprises 196 residues: Ribonuclease HII (196 aa).

Residues tyrosine 15–isoleucine 196 enclose the RNase H type-2 domain. 3 residues coordinate a divalent metal cation: aspartate 21, glutamate 22, and aspartate 112.

It belongs to the RNase HII family. The cofactor is Mn(2+). Requires Mg(2+) as cofactor.

The protein resides in the cytoplasm. The catalysed reaction is Endonucleolytic cleavage to 5'-phosphomonoester.. Functionally, endonuclease that specifically degrades the RNA of RNA-DNA hybrids. This chain is Ribonuclease HII, found in Rickettsia canadensis (strain McKiel).